Reading from the N-terminus, the 118-residue chain is Large ribosomal subunit protein bL20 (118 aa).

The protein belongs to the bacterial ribosomal protein bL20 family.

In terms of biological role, binds directly to 23S ribosomal RNA and is necessary for the in vitro assembly process of the 50S ribosomal subunit. It is not involved in the protein synthesizing functions of that subunit. This chain is Large ribosomal subunit protein bL20 (rplT), found in Thermotoga maritima (strain ATCC 43589 / DSM 3109 / JCM 10099 / NBRC 100826 / MSB8).